A 303-amino-acid polypeptide reads, in one-letter code: Proteasome subunit beta (303 aa).

Residues 1 to 64 (MTWPDRDTSA…VTPSDAVPHG (64 aa)) constitute a propeptide, removed in mature form; by autocatalysis. Residue threonine 65 is the Nucleophile of the active site.

Belongs to the peptidase T1B family. The 20S proteasome core is composed of 14 alpha and 14 beta subunits that assemble into four stacked heptameric rings, resulting in a barrel-shaped structure. The two inner rings, each composed of seven catalytic beta subunits, are sandwiched by two outer rings, each composed of seven alpha subunits. The catalytic chamber with the active sites is on the inside of the barrel. Has a gated structure, the ends of the cylinder being occluded by the N-termini of the alpha-subunits. Is capped by the proteasome-associated ATPase, ARC.

The protein resides in the cytoplasm. It catalyses the reaction Cleavage of peptide bonds with very broad specificity.. Its pathway is protein degradation; proteasomal Pup-dependent pathway. The formation of the proteasomal ATPase ARC-20S proteasome complex, likely via the docking of the C-termini of ARC into the intersubunit pockets in the alpha-rings, may trigger opening of the gate for substrate entry. Interconversion between the open-gate and close-gate conformations leads to a dynamic regulation of the 20S proteasome proteolysis activity. Functionally, component of the proteasome core, a large protease complex with broad specificity involved in protein degradation. The protein is Proteasome subunit beta of Mycolicibacterium gilvum (strain PYR-GCK) (Mycobacterium gilvum (strain PYR-GCK)).